Reading from the N-terminus, the 60-residue chain is Small, acid-soluble spore protein 1 (60 aa).

Belongs to the alpha/beta-type SASP family. SASP are degraded in the first minutes of spore germination and provide amino acids for both new protein synthesis and metabolism.

Its function is as follows. SASP are bound to spore DNA. They are double-stranded DNA-binding proteins that cause DNA to change to an a-like conformation. They protect the DNA backbone from chemical and enzymatic cleavage and are thus involved in dormant spore's high resistance to UV light. This Clostridium perfringens (strain 13 / Type A) protein is Small, acid-soluble spore protein 1 (ssp1).